The chain runs to 468 residues: Aldehyde dehydrogenase family 3 member B1 (468 aa).

Methionine 1 bears the N-acetylmethionine mark. 188–193 is a binding site for NAD(+); that stretch reads GSPRVG. Residues glutamate 210 and cysteine 244 contribute to the active site. The S-palmitoyl cysteine moiety is linked to residue cysteine 463. Cysteine 465 bears the Cysteine methyl ester mark. Cysteine 465 carries S-geranylgeranyl cysteine lipidation. Residues 466 to 468 constitute a propeptide, removed in mature form; the sequence is TLL.

Belongs to the aldehyde dehydrogenase family. Post-translationally, dually lipidated in the C-terminus; prenylation occurs prior to, and is a prerequisite for palmitoylation. It is also required for activity towards long-chain substrates. In terms of tissue distribution, highest expression in kidney and lung.

It localises to the cell membrane. It carries out the reaction an aldehyde + NADP(+) + H2O = a carboxylate + NADPH + 2 H(+). It catalyses the reaction an aldehyde + NAD(+) + H2O = a carboxylate + NADH + 2 H(+). The catalysed reaction is a long-chain fatty aldehyde + NAD(+) + H2O = a long-chain fatty acid + NADH + 2 H(+). The enzyme catalyses a medium-chain fatty aldehyde + NAD(+) + H2O = a medium-chain fatty acid + NADH + 2 H(+). It carries out the reaction octanal + NAD(+) + H2O = octanoate + NADH + 2 H(+). It catalyses the reaction nonanal + NAD(+) + H2O = nonanoate + NADH + 2 H(+). The catalysed reaction is hexadecanoate + NADH + 2 H(+) = hexadecanal + NAD(+) + H2O. The enzyme catalyses (2E)-octenal + NAD(+) + H2O = (2E)-octenoate + NADH + 2 H(+). It carries out the reaction (E)-non-2-enal + NAD(+) + H2O = (E)-non-2-enoate + NADH + 2 H(+). It catalyses the reaction (E)-4-hydroxynon-2-enal + NAD(+) + H2O = (E)-4-hydroxynon-2-enoate + NADH + 2 H(+). The catalysed reaction is (2E)-hexadecenal + NAD(+) + H2O = (E)-hexadec-2-enoate + NADH + 2 H(+). The enzyme catalyses benzaldehyde + NAD(+) + H2O = benzoate + NADH + 2 H(+). It carries out the reaction a medium-chain fatty aldehyde + NADP(+) + H2O = a medium-chain fatty acid + NADPH + 2 H(+). It catalyses the reaction hexanal + NADP(+) + H2O = hexanoate + NADPH + 2 H(+). The catalysed reaction is octanal + NADP(+) + H2O = octanoate + NADPH + 2 H(+). The enzyme catalyses nonanal + NADP(+) + H2O = nonanoate + NADPH + 2 H(+). It carries out the reaction (2E)-octenal + NADP(+) + H2O = (2E)-octenoate + NADPH + 2 H(+). It catalyses the reaction (E)-non-2-enal + NADP(+) + H2O = (E)-non-2-enoate + NADPH + 2 H(+). The catalysed reaction is (E)-4-hydroxynon-2-enal + NADP(+) + H2O = (E)-4-hydroxynon-2-enoate + NADPH + 2 H(+). The enzyme catalyses benzaldehyde + NADP(+) + H2O = benzoate + NADPH + 2 H(+). The protein operates within alcohol metabolism; ethanol degradation; acetate from ethanol: step 2/2. Its function is as follows. Oxidizes medium and long chain saturated and unsaturated fatty aldehydes generated in the plasma membrane into non-toxic fatty acids. May have a protective role against the cytotoxicity induced by lipid peroxidation. Short-chain fatty aldehydes are not good substrates. Can use both NADP(+) and NAD(+) as electron acceptor in vitro, however in vivo preference will depend on their tissue levels. Low activity towards acetaldehyde and 3,4-dihydroxyphenylacetaldehyde. Able to metabolize aromatic aldehydes such as benzaldehyde to their acid form. This Homo sapiens (Human) protein is Aldehyde dehydrogenase family 3 member B1 (ALDH3B1).